The sequence spans 227 residues: PKHD-type hydroxylase GDI1238/Gdia_1949 (227 aa).

Residues 78–178 (RVVPPLFNRY…RLASFFWTQS (101 aa)) enclose the Fe2OG dioxygenase domain. Fe cation is bound by residues His-96, Asp-98, and His-159. 2-oxoglutarate is bound at residue Arg-169.

It depends on Fe(2+) as a cofactor. L-ascorbate serves as cofactor.

In Gluconacetobacter diazotrophicus (strain ATCC 49037 / DSM 5601 / CCUG 37298 / CIP 103539 / LMG 7603 / PAl5), this protein is PKHD-type hydroxylase GDI1238/Gdia_1949.